We begin with the raw amino-acid sequence, 704 residues long: Inhibitor of carbonic anhydrase (704 aa).

The first 19 residues, Met1–Ala19, serve as a signal peptide directing secretion. Transferrin-like domains lie at Val25 to Arg347 and Val357 to Gln689. Disulfide bonds link Cys28-Cys67, Cys38-Cys58, Cys137-Cys213, Cys172-Cys188, Cys175-Cys196, Cys185-Cys198, Cys246-Cys260, Cys360-Cys392, Cys370-Cys383, Cys417-Cys699, Cys440-Cys662, Cys472-Cys549, Cys496-Cys690, Cys506-Cys520, Cys517-Cys532, and Cys589-Cys603. Asn491 carries N-linked (GlcNAc...) asparagine glycosylation.

This sequence belongs to the transferrin family. As to quaternary structure, monomer. Interacts (via transferrin-like domain 2) with CA2. In terms of processing, N-glycosylated. In terms of tissue distribution, blood plasma (at protein level).

It is found in the secreted. Functionally, inhibitor for carbonic anhydrase 2 (CA2). Does not bind iron ions. The polypeptide is Inhibitor of carbonic anhydrase (Sus scrofa (Pig)).